The primary structure comprises 193 residues: Recombination protein RecR (193 aa).

Residues 61 to 76 (CASCNALSESEICEIC) form a C4-type zinc finger. In terms of domain architecture, Toprim spans 84 to 170 (SQLCMVLHPR…TFTKIAQGVP (87 aa)).

Belongs to the RecR family.

Functionally, may play a role in DNA repair. It seems to be involved in an RecBC-independent recombinational process of DNA repair. It may act with RecF and RecO. This Helicobacter pylori (strain Shi470) protein is Recombination protein RecR.